The following is a 168-amino-acid chain: Monothiol glutaredoxin-S7, chloroplastic (168 aa).

The N-terminal 54 residues, 1-54, are a transit peptide targeting the chloroplast; the sequence is MAATAAASVAAISPLPGASLPRPVSARVPLLPRASPPTWRLSVGSARARSTRCL. The Glutaredoxin domain occupies 67–168; that stretch reads RATLDKVVGS…QETLEKAMLS (102 aa). Lysine 84 serves as a coordination point for glutathione. Cysteine 92 contacts [2Fe-2S] cluster. Glutathione is bound by residues arginine 121, phenylalanine 133, and 146-147; that span reads CD.

This sequence belongs to the glutaredoxin family. CGFS subfamily.

The protein resides in the plastid. It localises to the chloroplast. In terms of biological role, may only reduce GSH-thiol disulfides, but not protein disulfides. This Oryza sativa subsp. japonica (Rice) protein is Monothiol glutaredoxin-S7, chloroplastic (GRXS7).